The primary structure comprises 257 residues: 4-hydroxy-tetrahydrodipicolinate reductase (257 aa).

Residues 11–16 (GANGRM) and E37 contribute to the NAD(+) site. Residue R38 coordinates NADP(+). Residues 86 to 88 (GST) and 110 to 113 (SGNY) each bind NAD(+). H144 (proton donor/acceptor) is an active-site residue. H145 contributes to the (S)-2,3,4,5-tetrahydrodipicolinate binding site. K148 functions as the Proton donor in the catalytic mechanism. 154-155 (GT) provides a ligand contact to (S)-2,3,4,5-tetrahydrodipicolinate.

The protein belongs to the DapB family.

Its subcellular location is the cytoplasm. It carries out the reaction (S)-2,3,4,5-tetrahydrodipicolinate + NAD(+) + H2O = (2S,4S)-4-hydroxy-2,3,4,5-tetrahydrodipicolinate + NADH + H(+). The enzyme catalyses (S)-2,3,4,5-tetrahydrodipicolinate + NADP(+) + H2O = (2S,4S)-4-hydroxy-2,3,4,5-tetrahydrodipicolinate + NADPH + H(+). Its pathway is amino-acid biosynthesis; L-lysine biosynthesis via DAP pathway; (S)-tetrahydrodipicolinate from L-aspartate: step 4/4. Functionally, catalyzes the conversion of 4-hydroxy-tetrahydrodipicolinate (HTPA) to tetrahydrodipicolinate. The protein is 4-hydroxy-tetrahydrodipicolinate reductase of Caulobacter vibrioides (strain ATCC 19089 / CIP 103742 / CB 15) (Caulobacter crescentus).